The sequence spans 284 residues: Ribosomal RNA small subunit methyltransferase A (284 aa).

S-adenosyl-L-methionine-binding residues include Asn-26, Leu-28, Gly-53, Glu-74, Asp-97, and Asn-127.

The protein belongs to the class I-like SAM-binding methyltransferase superfamily. rRNA adenine N(6)-methyltransferase family. RsmA subfamily.

It localises to the cytoplasm. It catalyses the reaction adenosine(1518)/adenosine(1519) in 16S rRNA + 4 S-adenosyl-L-methionine = N(6)-dimethyladenosine(1518)/N(6)-dimethyladenosine(1519) in 16S rRNA + 4 S-adenosyl-L-homocysteine + 4 H(+). In terms of biological role, specifically dimethylates two adjacent adenosines (A1518 and A1519) in the loop of a conserved hairpin near the 3'-end of 16S rRNA in the 30S particle. May play a critical role in biogenesis of 30S subunits. This chain is Ribosomal RNA small subunit methyltransferase A, found in Anaeromyxobacter dehalogenans (strain 2CP-C).